Here is an 83-residue protein sequence, read N- to C-terminus: MNATIREILAKFGQLPTPVDTIADEADLYAAGLSSFASVQLMLGIEEAFDIEFPDNLLNRKSFASIKAIEDTVKLILDGKEAA.

Residues 1-80 (MNATIREILA…DTVKLILDGK (80 aa)) form the Carrier domain. An O-(pantetheine 4'-phosphoryl)serine modification is found at Ser35.

4'-phosphopantetheine is transferred from CoA to a specific serine of the apo-form of this carrier protein.

Functionally, aminoacyl carrier protein. Can be charged with L-alanine, L-glycine or L-serine, via the formation of a thioester bond between the amino acid and the 4'-phosphopantetheinyl prosthetic group, catalyzed by the Atu2573 ligase. The sequence is that of Aminoacyl carrier protein from Agrobacterium fabrum (strain C58 / ATCC 33970) (Agrobacterium tumefaciens (strain C58)).